A 588-amino-acid polypeptide reads, in one-letter code: Sperm-associated microtubule inner protein 4 (588 aa).

Thr-219 is modified (phosphothreonine). Residues Ser-406, Ser-421, and Ser-427 each carry the phosphoserine modification. Tyr-441 is modified (phosphotyrosine). 3 positions are modified to phosphoserine: Ser-457, Ser-484, and Ser-516.

Predominantly expressed in the testes.

It localises to the cytoplasm. Its subcellular location is the cytoskeleton. The protein resides in the microtubule organizing center. It is found in the centrosome. The protein localises to the flagellum axoneme. Microtubule inner protein (MIP) part of the dynein-decorated doublet microtubules (DMTs) in flagellum axoneme. May serve to reinforce and thus stabilize the microtubule structure in the sperm flagella. This Mus musculus (Mouse) protein is Sperm-associated microtubule inner protein 4 (Spmip4).